A 96-amino-acid chain; its full sequence is NADH-ubiquinone oxidoreductase chain 4L (96 aa).

3 helical membrane-spanning segments follow: residues 1–21, 27–47, and 61–81; these read MELM…ALSL, MLAL…LVMF, and IILL…VVAI.

It belongs to the complex I subunit 4L family.

It localises to the mitochondrion membrane. The catalysed reaction is a ubiquinone + NADH + 5 H(+)(in) = a ubiquinol + NAD(+) + 4 H(+)(out). Functionally, core subunit of the mitochondrial membrane respiratory chain NADH dehydrogenase (Complex I) which catalyzes electron transfer from NADH through the respiratory chain, using ubiquinone as an electron acceptor. Part of the enzyme membrane arm which is embedded in the lipid bilayer and involved in proton translocation. In Lycodon semicarinatus (Ryukyu odd-tooth snake), this protein is NADH-ubiquinone oxidoreductase chain 4L (MT-ND4L).